Here is a 212-residue protein sequence, read N- to C-terminus: Vesicle transport protein SFT2C (212 aa).

Residues 1–78 lie on the Cytoplasmic side of the membrane; sequence MADLHRQLQD…TRGQRLVAGG (78 aa). A helical membrane pass occupies residues 79–99; the sequence is LCLLLAALCFGLAALYAPVLL. Over 100–104 the chain is Lumenal; that stretch reads LRARK. Residues 105 to 125 form a helical membrane-spanning segment; the sequence is FALLWSLGSVLAWASAALLRG. Residues 126-142 lie on the Cytoplasmic side of the membrane; the sequence is GPACGRLLRGEETPSRS. The chain crosses the membrane as a helical span at residues 143–165; it reads TLGYAAALGATLYAALVLRSTVL. The Lumenal portion of the chain corresponds to 166–174; that stretch reads TALGACAQV. Residues 175–197 traverse the membrane as a helical segment; it reads AALLYALIGLLPWGGVTALRLAL. Over 198-212 the chain is Cytoplasmic; the sequence is GRLNRGTGLANALPV.

Belongs to the SFT2 family.

Its subcellular location is the membrane. May be involved in fusion of retrograde transport vesicles derived from an endocytic compartment with the Golgi complex. This chain is Vesicle transport protein SFT2C, found in Mus musculus (Mouse).